A 505-amino-acid polypeptide reads, in one-letter code: MRSVAVGAVDFSGRPFHFLGIGGIGMSALAYVLAKRHLPVSGSDLRRTHITDRLESVGAKIFQDQVPENLDYFQSLQVNPAVALPTGSPGSGLTLEQIAESASNGVNGNGRYQTHCLPQVVCSTAINEGNLEYQGAIAKNCPIYHRSDILAALIAESRGIGVAGTHGKTTTSSLIGYVLKEAGLDPTIVVGGEVDAWQGNAYLGSGEYLVAEVDESDGSLTKHHPEIGIVTNIELDHPDHYSTLAEVVEIFRTFESHCQTLIGCLDCGVVRQHLSPTITYSLENHPEADYQARQIKRQAHGNEVEVWERGVCLGTMTVTLPGDHNISNALAAVAVGRLLGLDFPVIAQAIASFNGAKRRFECKGYCNGITFIDDYAHHPSELLATLAAAKQKVTHGKYERVVAIFQPHRYSRTHTFMAEFATAFKDADLVVLTDIYSAGEQNPYNIRGEDLAKAVGQHHGHVVYQPRLTELREFLPKVLQSGDLALFLGAGNLNQQIAPVLAACA.

ATP is bound at residue 164–170; it reads GTHGKTT.

Belongs to the MurCDEF family.

It is found in the cytoplasm. The catalysed reaction is UDP-N-acetyl-alpha-D-muramate + L-alanine + ATP = UDP-N-acetyl-alpha-D-muramoyl-L-alanine + ADP + phosphate + H(+). It functions in the pathway cell wall biogenesis; peptidoglycan biosynthesis. Its function is as follows. Cell wall formation. This chain is UDP-N-acetylmuramate--L-alanine ligase, found in Synechocystis sp. (strain ATCC 27184 / PCC 6803 / Kazusa).